The chain runs to 444 residues: 3-phosphoshikimate 1-carboxyvinyltransferase (444 aa).

Residues lysine 29, serine 30, and arginine 34 each contribute to the 3-phosphoshikimate site. Lysine 29 provides a ligand contact to phosphoenolpyruvate. Positions 103 and 132 each coordinate phosphoenolpyruvate. 3-phosphoshikimate is bound by residues serine 177, glutamine 179, aspartate 329, and lysine 356. Glutamine 179 lines the phosphoenolpyruvate pocket. Aspartate 329 (proton acceptor) is an active-site residue. Positions 360 and 402 each coordinate phosphoenolpyruvate.

This sequence belongs to the EPSP synthase family. As to quaternary structure, monomer.

It is found in the cytoplasm. The catalysed reaction is 3-phosphoshikimate + phosphoenolpyruvate = 5-O-(1-carboxyvinyl)-3-phosphoshikimate + phosphate. The protein operates within metabolic intermediate biosynthesis; chorismate biosynthesis; chorismate from D-erythrose 4-phosphate and phosphoenolpyruvate: step 6/7. In terms of biological role, catalyzes the transfer of the enolpyruvyl moiety of phosphoenolpyruvate (PEP) to the 5-hydroxyl of shikimate-3-phosphate (S3P) to produce enolpyruvyl shikimate-3-phosphate and inorganic phosphate. This is 3-phosphoshikimate 1-carboxyvinyltransferase from Prochlorococcus marinus (strain NATL2A).